We begin with the raw amino-acid sequence, 683 residues long: Outer dynein arm-docking complex subunit 4 (683 aa).

4 TPR repeats span residues 13-46 (FPSY…QSGD), 47-80 (KNCL…DPTF), 48-80 (NCLV…DPTF), and 81-114 (CKGI…RPDR). The disordered stretch occupies residues 158 to 179 (QQKPHPVRQLIHHPKRESKRKG). Residues 167-179 (LIHHPKRESKRKG) are compositionally biased toward basic residues. TPR repeat units follow at residues 275–311 (LKSL…NKEE), 320–353 (GNLY…AKEY), 360–393 (SRAL…AKTT), 397–430 (TWLF…AEEE), and 437–470 (LNAS…AKLV). 2 disordered regions span residues 510–537 (ENAT…PEKV) and 553–683 (VLSK…EPIE). 4 stretches are compositionally biased toward basic and acidic residues: residues 521–537 (TAKE…PEKV), 566–590 (PEQR…ERGP), 602–620 (GRTE…RPSE), and 629–675 (SSPR…IEKD). One copy of the TPR 15 repeat lies at 592-625 (DTAKGQFGEAGRTEQNREETREIYRRPSELDQNL).

Component of the outer dynein arm-docking complex along with ODAD1, ODAD2 and ODAD3. Interacts with ODAD1; this interaction may facilitate the recruitment and/or attachment of outer dynein arm docking complex proteins, including ODAD1, ODAD3 and ODAD2, to ciliary axonemes. Interacts with components of the IFT complex A, including IFT140, TTC21B/IFT139 and WDR19/IFT144, and the IFT complex B, including IFT46, IFT52 and IFT57. Interacts with CFAP53. As to expression, expressed in trachea multiciliated cells.

The protein localises to the cytoplasm. Its subcellular location is the cytoskeleton. The protein resides in the cilium axoneme. In terms of biological role, component of the outer dynein arm-docking complex (ODA-DC) that mediates outer dynein arms (ODA) binding onto the doublet microtubule. Plays an essential role for the assembly of ODA-DC and for the docking of ODA in ciliary axoneme. This chain is Outer dynein arm-docking complex subunit 4, found in Bos taurus (Bovine).